We begin with the raw amino-acid sequence, 377 residues long: Sterol 24-C-methyltransferase erg6 (377 aa).

Belongs to the class I-like SAM-binding methyltransferase superfamily. Erg6/SMT family.

Its subcellular location is the microsome. The protein resides in the mitochondrion. The enzyme catalyses lanosterol + S-adenosyl-L-methionine = eburicol + S-adenosyl-L-homocysteine + H(+). The protein operates within steroid metabolism; ergosterol biosynthesis. With respect to regulation, specific and total activity is decreased in presence of alpha-bisabolol. Its function is as follows. Sterol 24-C-methyltransferase; part of the third module of ergosterol biosynthesis pathway that includes the late steps of the pathway. Methylates lanosterol at C-24 to produce eburicol. The third module or late pathway involves the ergosterol synthesis itself through consecutive reactions that mainly occur in the endoplasmic reticulum (ER) membrane. Firstly, the squalene synthase erg9 catalyzes the condensation of 2 farnesyl pyrophosphate moieties to form squalene, which is the precursor of all steroids. Squalene synthase is crucial for balancing the incorporation of farnesyl diphosphate (FPP) into sterol and nonsterol isoprene synthesis. Secondly, squalene is converted into lanosterol by the consecutive action of the squalene epoxidase erg1 and the lanosterol synthase erg7. Then, the delta(24)-sterol C-methyltransferase erg6 methylates lanosterol at C-24 to produce eburicol. Eburicol is the substrate of the sterol 14-alpha demethylase encoded by cyp51A and cyp51B, to yield 4,4,24-trimethyl ergosta-8,14,24(28)-trienol. The C-14 reductase erg24 then reduces the C14=C15 double bond which leads to 4,4-dimethylfecosterol. A sequence of further demethylations at C-4, involving the C-4 demethylation complex containing the C-4 methylsterol oxidases erg25A or erg25B, the sterol-4-alpha-carboxylate 3-dehydrogenase erg26 and the 3-keto-steroid reductase erg27, leads to the production of fecosterol via 4-methylfecosterol. The C-8 sterol isomerase erg2 then catalyzes the reaction which results in unsaturation at C-7 in the B ring of sterols and thus converts fecosterol to episterol. The sterol-C5-desaturase erg3B then catalyzes the introduction of a C-5 double bond in the B ring to produce 5-dehydroepisterol. The 2 other sterol-C5-desaturases, erg3A and erg3C, seem to be less important in ergosterol biosynthesis. The C-22 sterol desaturase erg5 further converts 5-dehydroepisterol into ergosta-5,7,22,24(28)-tetraen-3beta-ol by forming the C-22(23) double bond in the sterol side chain. Finally, ergosta-5,7,22,24(28)-tetraen-3beta-ol is substrate of the C-24(28) sterol reductases erg4A and erg4B to produce ergosterol. Possible alternative sterol biosynthetic pathways might exist from fecosterol to ergosterol, depending on the activities of the erg3 isoforms. The sequence is that of Sterol 24-C-methyltransferase erg6 from Aspergillus fumigatus (strain ATCC MYA-4609 / CBS 101355 / FGSC A1100 / Af293) (Neosartorya fumigata).